An 871-amino-acid polypeptide reads, in one-letter code: Alanine--tRNA ligase (871 aa).

Zn(2+) contacts are provided by His559, His563, Cys661, and His665.

The protein belongs to the class-II aminoacyl-tRNA synthetase family. Zn(2+) is required as a cofactor.

The protein resides in the cytoplasm. The enzyme catalyses tRNA(Ala) + L-alanine + ATP = L-alanyl-tRNA(Ala) + AMP + diphosphate. Functionally, catalyzes the attachment of alanine to tRNA(Ala) in a two-step reaction: alanine is first activated by ATP to form Ala-AMP and then transferred to the acceptor end of tRNA(Ala). Also edits incorrectly charged Ser-tRNA(Ala) and Gly-tRNA(Ala) via its editing domain. The polypeptide is Alanine--tRNA ligase (Aquifex pyrophilus).